A 161-amino-acid polypeptide reads, in one-letter code: MAKKKSKDKAGSNTIAMNKQARHEYFIDDEIEAGIELQGWEVKSLRSGKVNIAESYVYVRDGEIFISGMTITPLQAASTHVIANPTRIRKLLMSRKEIDNLIGRVNREGMTLVATTMYWVRSWAKIKVGVAKGKKLHDKRTDSKEKDWNRDKARIMKSSLR.

The disordered stretch occupies residues 138-161; the sequence is DKRTDSKEKDWNRDKARIMKSSLR. Positions 139–154 are enriched in basic and acidic residues; the sequence is KRTDSKEKDWNRDKAR.

Belongs to the SmpB family.

The protein resides in the cytoplasm. Its function is as follows. Required for rescue of stalled ribosomes mediated by trans-translation. Binds to transfer-messenger RNA (tmRNA), required for stable association of tmRNA with ribosomes. tmRNA and SmpB together mimic tRNA shape, replacing the anticodon stem-loop with SmpB. tmRNA is encoded by the ssrA gene; the 2 termini fold to resemble tRNA(Ala) and it encodes a 'tag peptide', a short internal open reading frame. During trans-translation Ala-aminoacylated tmRNA acts like a tRNA, entering the A-site of stalled ribosomes, displacing the stalled mRNA. The ribosome then switches to translate the ORF on the tmRNA; the nascent peptide is terminated with the 'tag peptide' encoded by the tmRNA and targeted for degradation. The ribosome is freed to recommence translation, which seems to be the essential function of trans-translation. This chain is SsrA-binding protein, found in Aliivibrio fischeri (strain ATCC 700601 / ES114) (Vibrio fischeri).